Reading from the N-terminus, the 169-residue chain is MRKRQPVLKQEKTLNPELKTWLYASGSLTQQLTELGGGKFSVKPFKEHFQRLTFADSQWMNMPHTHTSWVRETYLYGSDVEPWVKAKSIFPIQSLQKKARIFQHIGSKPIGLFLFQRTTPLCDRRVIRLPEGWTRQSCYTWHGCKFIVQETFLPAFEAFLYQQHDKELL.

The substrate site is built by Arg71, Ile110, and Glu150.

It belongs to the UbiC family.

Its subcellular location is the cytoplasm. It carries out the reaction chorismate = 4-hydroxybenzoate + pyruvate. It functions in the pathway cofactor biosynthesis; ubiquinone biosynthesis. In terms of biological role, removes the pyruvyl group from chorismate, with concomitant aromatization of the ring, to provide 4-hydroxybenzoate (4HB) for the ubiquinone pathway. This Acinetobacter baumannii (strain ATCC 17978 / DSM 105126 / CIP 53.77 / LMG 1025 / NCDC KC755 / 5377) protein is Probable chorismate pyruvate-lyase.